Reading from the N-terminus, the 234-residue chain is Large ribosomal subunit protein uL1 (234 aa).

Belongs to the universal ribosomal protein uL1 family. In terms of assembly, part of the 50S ribosomal subunit.

Its function is as follows. Binds directly to 23S rRNA. The L1 stalk is quite mobile in the ribosome, and is involved in E site tRNA release. Protein L1 is also a translational repressor protein, it controls the translation of the L11 operon by binding to its mRNA. This is Large ribosomal subunit protein uL1 from Aliivibrio fischeri (strain ATCC 700601 / ES114) (Vibrio fischeri).